Reading from the N-terminus, the 143-residue chain is Transcriptional regulator MraZ (143 aa).

SpoVT-AbrB domains lie at 5–47 and 76–119; these read THSP…SQKE and ASDE…DADA.

The protein belongs to the MraZ family. Forms oligomers.

The protein resides in the cytoplasm. Its subcellular location is the nucleoid. This is Transcriptional regulator MraZ from Paenarthrobacter aurescens (strain TC1).